The chain runs to 354 residues: Ferrochelatase (354 aa).

Residues His-214 and Glu-295 each contribute to the Fe cation site.

Belongs to the ferrochelatase family.

Its subcellular location is the cytoplasm. It carries out the reaction heme b + 2 H(+) = protoporphyrin IX + Fe(2+). The protein operates within porphyrin-containing compound metabolism; protoheme biosynthesis; protoheme from protoporphyrin-IX: step 1/1. In terms of biological role, catalyzes the ferrous insertion into protoporphyrin IX. This is Ferrochelatase from Burkholderia vietnamiensis (strain G4 / LMG 22486) (Burkholderia cepacia (strain R1808)).